We begin with the raw amino-acid sequence, 169 residues long: uncharacterized protein (169 aa).

This is an uncharacterized protein from Mycoplasma genitalium (strain ATCC 33530 / DSM 19775 / NCTC 10195 / G37) (Mycoplasmoides genitalium).